The following is a 245-amino-acid chain: Adenosine 5'-phosphosulfate reductase (245 aa).

Positions 124, 125, 205, and 208 each coordinate [4Fe-4S] cluster. The active-site Nucleophile; cysteine thiosulfonate intermediate is C231.

Belongs to the PAPS reductase family. CysH subfamily. [4Fe-4S] cluster is required as a cofactor.

Its subcellular location is the cytoplasm. The enzyme catalyses [thioredoxin]-disulfide + sulfite + AMP + 2 H(+) = adenosine 5'-phosphosulfate + [thioredoxin]-dithiol. The protein operates within sulfur metabolism; hydrogen sulfide biosynthesis; sulfite from sulfate. In terms of biological role, catalyzes the formation of sulfite from adenosine 5'-phosphosulfate (APS) using thioredoxin as an electron donor. In Chelativorans sp. (strain BNC1), this protein is Adenosine 5'-phosphosulfate reductase.